A 208-amino-acid polypeptide reads, in one-letter code: Intraflagellar transport protein 43 homolog (208 aa).

The residue at position 1 (M1) is an N-acetylmethionine. Positions 18 to 65 (SRAKMGRRAQQESAQAENHLNGKNSSLTLTGETSSAKLPRCRQGGWAG) are disordered. A compositionally biased stretch (polar residues) spans 28 to 53 (QESAQAENHLNGKNSSLTLTGETSSA). S78 carries the phosphoserine modification.

The protein belongs to the IFT43 family. As to quaternary structure, component of the IFT complex A (IFT-A) complex. IFT-A complex is divided into a core subcomplex composed of IFT122:IFT140:WDR19 which is associated with TULP3 and a peripheral subcomplex composed of IFT43:WDR35:TTC21B. Interacts directy with IFT122, WDR35 and TTC21B. Expressed in the retina, predominantly in the photoreceptor outer segment.

Its subcellular location is the cytoplasm. It localises to the cytoskeleton. It is found in the cell projection. The protein localises to the cilium. In terms of biological role, as a component of IFT complex A (IFT-A), a complex required for retrograde ciliary transport and entry into cilia of G protein-coupled receptors (GPCRs), it is involved in ciliogenesis. Involved in retrograde ciliary transport along microtubules from the ciliary tip to the base. This chain is Intraflagellar transport protein 43 homolog, found in Homo sapiens (Human).